Consider the following 376-residue polypeptide: Protein insensitive (376 aa).

Residues 50-79 (QVEVENRALRDKVRYLEAKLQQHKDLLSQI) are a coiled coil. The BEN domain maps to 258-356 (GPNNTCVPAS…TKCADENKMM (99 aa)).

In terms of assembly, homodimer. Interacts (via BEN domain) with Su(H). Interacts with Cp190.

The protein resides in the nucleus. In terms of biological role, can act as both a transcriptional repressor and corepressor. Represses the expression of genes involved in neural development and preferentially binds palindromic sequence 5'-CCAATTGG-3' to mediate transcriptional repression. Acts as a corepressor for suppressor of hairless (Su(H)) and inhibits Notch signaling during peripheral nervous system development. The protein is Protein insensitive (insv) of Drosophila melanogaster (Fruit fly).